The sequence spans 1147 residues: Lon protease homolog 2, peroxisomal (1147 aa).

In terms of domain architecture, Lon N-terminal spans 20 to 348 (LPTYKLDSNL…EVNRMLESMI (329 aa)). 2 disordered regions span residues 395–444 (KPDK…DDDD) and 561–626 (KIES…SLTT). A compositionally biased stretch (acidic residues) spans 427-444 (DGNESNDEYDDDEDDDDD). Basic and acidic residues-rich tracts occupy residues 561 to 574 (KIES…KKNE) and 582 to 597 (KNDK…RSDD). 651-658 (GPPGTGKT) serves as a coordination point for ATP. The Lon proteolytic domain maps to 903–1131 (SAKCGVVNGL…WDVIKAVWGD (229 aa)). Catalysis depends on residues Ser1006 and Lys1049.

The protein belongs to the peptidase S16 family.

The protein resides in the peroxisome matrix. The enzyme catalyses Hydrolysis of proteins in presence of ATP.. ATP-dependent serine protease that mediates the selective degradation of misfolded and unassembled polypeptides in the peroxisomal matrix. Necessary for type 2 peroxisome targeting signal (PTS2)-containing protein processing and facilitates peroxisome matrix protein import. The chain is Lon protease homolog 2, peroxisomal from Debaryomyces hansenii (strain ATCC 36239 / CBS 767 / BCRC 21394 / JCM 1990 / NBRC 0083 / IGC 2968) (Yeast).